A 91-amino-acid chain; its full sequence is Large ribosomal subunit protein eL43 (91 aa).

A C4-type zinc finger spans residues 39 to 60 (CSFCGKDAVRRSSVGIWKCNGC).

The protein belongs to the eukaryotic ribosomal protein eL43 family.

In Dictyostelium discoideum (Social amoeba), this protein is Large ribosomal subunit protein eL43 (rpl37A).